The following is a 381-amino-acid chain: Heme A synthase (381 aa).

Transmembrane regions (helical) follow at residues 25-45, 112-132, 138-158, 176-196, and 212-232; these read GAVRAWLYLLAVLVVAMVAVG, LLGRIVGLVFFLPFAWFWWRG, LLLGLLGLGLLGGLQGAIGWI, LALHLTTASLILAGLVWLAAG, and VAGLLPVLVLIQIWLGGLVAG. Histidine 277 lines the heme pocket. The next 3 helical transmembrane spans lie at 279 to 299, 307 to 327, and 329 to 349; these read LFAYLVVLVALAHAVQAVRMA, AMGVAALTLAQMGLGIVTLLL, and VPLWAGLAHQVFAMAVLIMAT. Residue histidine 337 coordinates heme.

It belongs to the COX15/CtaA family. Type 2 subfamily. Interacts with CtaB. Heme b is required as a cofactor.

It is found in the cell membrane. The enzyme catalyses Fe(II)-heme o + 2 A + H2O = Fe(II)-heme a + 2 AH2. Its pathway is porphyrin-containing compound metabolism; heme A biosynthesis; heme A from heme O: step 1/1. Catalyzes the conversion of heme O to heme A by two successive hydroxylations of the methyl group at C8. The first hydroxylation forms heme I, the second hydroxylation results in an unstable dihydroxymethyl group, which spontaneously dehydrates, resulting in the formyl group of heme A. The polypeptide is Heme A synthase (Methylorubrum populi (strain ATCC BAA-705 / NCIMB 13946 / BJ001) (Methylobacterium populi)).